Reading from the N-terminus, the 225-residue chain is U2 small nuclear ribonucleoprotein B'' (225 aa).

The 80-residue stretch at 7-86 (HTIYINNMND…KPMRIQYAKT (80 aa)) folds into the RRM 1 domain. The disordered stretch occupies residues 99–145 (ADKEKKKEKKKAKTVEQTATTTNKKPGQGTPNSANTQGNSTPNPQVP). Lys-111 carries the N6-acetyllysine; alternate modification. Lys-111 is covalently cross-linked (Glycyl lysine isopeptide (Lys-Gly) (interchain with G-Cter in SUMO2); alternate). The segment covering 113–123 (VEQTATTTNKK) has biased composition (low complexity). Over residues 127 to 141 (GTPNSANTQGNSTPN) the composition is skewed to polar residues. At Tyr-151 the chain carries Phosphotyrosine. An RRM 2 domain is found at 151-225 (YILFLNNLPE…HAMKITYAKK (75 aa)).

This sequence belongs to the RRM U1 A/B'' family. As to quaternary structure, identified in the spliceosome B complex. Identified in the spliceosome C complex. Present in a spliceosome complex assembled in vitro, and composed of SNRPB2, HPRP8BP and CRNKL1. Contributes to the binding of stem loop IV of U2 snRNA with SNRPP1.

The protein localises to the nucleus. In terms of biological role, involved in pre-mRNA splicing as component of the spliceosome. Associated with sn-RNP U2, where it contributes to the binding of stem loop IV of U2 snRNA. This chain is U2 small nuclear ribonucleoprotein B'' (SNRPB2), found in Homo sapiens (Human).